Reading from the N-terminus, the 319-residue chain is Cell surface A33 antigen (319 aa).

Residues 1–21 (MVGKMWPVLWTLCAVRVTVDA) form the signal peptide. The region spanning 22 to 134 (ISVETPQDVL…LEGNTKSRVR (113 aa)) is the Ig-like V-type domain. At 22–235 (ISVETPQDVL…VAVRSPSMNV (214 aa)) the chain is on the extracellular side. Intrachain disulfides connect cysteine 43–cysteine 117, cysteine 146–cysteine 222, and cysteine 162–cysteine 211. Asparagine 112, asparagine 200, and asparagine 223 each carry an N-linked (GlcNAc...) asparagine glycan. An Ig-like C2-type domain is found at 140-227 (PPSKPECGIE…GTQFCNITVA (88 aa)). Residues 236-256 (ALYVGIAVGVVAALIIIGIII) form a helical membrane-spanning segment. Residues 257-319 (YCCCCRGKDD…GRESPDHLDQ (63 aa)) are Cytoplasmic-facing. Composition is skewed to basic and acidic residues over residues 267–295 (NTED…SRER) and 303–319 (QEEQ…HLDQ). Positions 267 to 319 (NTEDKEDARPNREAYEEPPEQLRELSREREEEDDYRQEEQRSTGRESPDHLDQ) are disordered.

N-glycosylated, contains approximately 8 kDa of N-linked carbohydrate. Post-translationally, palmitoylated. As to expression, expressed in normal gastrointestinal epithelium and in 95% of colon cancers.

It localises to the membrane. In terms of biological role, may play a role in cell-cell recognition and signaling. This chain is Cell surface A33 antigen (GPA33), found in Homo sapiens (Human).